Consider the following 92-residue polypeptide: UPF0358 protein Exig_1994 (92 aa).

Belongs to the UPF0358 family.

The polypeptide is UPF0358 protein Exig_1994 (Exiguobacterium sibiricum (strain DSM 17290 / CCUG 55495 / CIP 109462 / JCM 13490 / 255-15)).